The chain runs to 452 residues: MPAVLLVLYVNPPPSVCILTQKLSLGLYNQWWRVCRSVPPPWYVFFNKRSMSTFKLMMDGRLVFAMAIAILSVVLSCGTCEKAKRAVRGRQDRPKEFPPPRYNYTILTRYNATALASPFINDQVKNVDLRIVTATRPCEMIALIAKTNIDSILKELAAAQKTYSARLTWFKIMPTCATPIHDVSYMKCNPKLSFAMCDERSDILWQASLITMAAETDDELGLVLAAPAHSASGLYRRVIEIDGRRIYTDFSVTIPSERCPIAFEQNFGNPDRCKTPEQYSRGEVFTRRFLGEFNFPQGEHMTWLKFWFVYDGGNLPVQFYEAQAFARPVPPDNHPGFDSVESEITQNKTDPKPGQADPKPNQPFKWPSIKHLAPRLDEVDEVIEPVTKPPKTSKSNSTFVGISVGLGIAGLVLVGVILYVCLRRKKELKKSAQNGLTRLRSTFKDVKYTQLP.

The first 19 residues, 1–19 (MPAVLLVLYVNPPPSVCIL), serve as a signal peptide directing secretion. Topologically, residues 20-405 (TQKLSLGLYN…NSTFVGISVG (386 aa)) are virion surface. Residues N103 and N111 are each glycosylated (N-linked (GlcNAc...) asparagine; by host). 3 disulfides stabilise this stretch: C138-C259, C176-C273, and C188-C197. A disordered region spans residues 331–365 (PDNHPGFDSVESEITQNKTDPKPGQADPKPNQPFK). N-linked (GlcNAc...) asparagine; by host glycosylation is found at N347 and N396. A helical transmembrane segment spans residues 406–422 (LGIAGLVLVGVILYVCL). The Intravirion portion of the chain corresponds to 423–452 (RRKKELKKSAQNGLTRLRSTFKDVKYTQLP).

Belongs to the herpesviridae glycoprotein D family.

The protein resides in the virion membrane. In terms of biological role, envelope glycoprotein that binds to host cell entry receptors, promoting the virus entry into host cells. May trigger fusion with host membrane, by recruiting the fusion machinery composed of gB and gH/gL. This Equine herpesvirus 1 (strain Ab4p) (EHV-1) protein is Envelope glycoprotein D (gD).